The primary structure comprises 1069 residues: Carbamoyl phosphate synthase large chain (1069 aa).

A carboxyphosphate synthetic domain region spans residues 1–401; the sequence is MPLNKDIKRV…AFLKGIRSLE (401 aa). Arg-129, Arg-169, Gly-175, Gly-176, Lys-208, Val-210, Glu-215, Gly-241, Ile-242, His-243, Gln-284, and Glu-298 together coordinate ATP. Residues 133–327 enclose the ATP-grasp 1 domain; the sequence is RDMMNRIGEP…IAKLAAKIAL (195 aa). Residues Gln-284, Glu-298, and Asn-300 each contribute to the Mg(2+) site. Mn(2+) is bound by residues Gln-284, Glu-298, and Asn-300. The oligomerization domain stretch occupies residues 402–549; sequence IGKYSLDHKK…YSTYEQYDEV (148 aa). Residues 550–932 form a carbamoyl phosphate synthetic domain region; the sequence is EVSNRRKVIV…ALYKGFVGAN (383 aa). One can recognise an ATP-grasp 2 domain in the interval 674–864; that stretch reads DELLERLDIS…IVDIATQVML (191 aa). 10 residues coordinate ATP: Arg-710, Lys-749, Leu-751, Glu-755, Gly-780, Val-781, His-782, Ser-783, Gln-823, and Glu-835. Mg(2+)-binding residues include Gln-823, Glu-835, and Asn-837. Positions 823, 835, and 837 each coordinate Mn(2+). In terms of domain architecture, MGS-like spans 932–1069; the sequence is NMYPSKEKGK…KDLEVFDITK (138 aa). The tract at residues 933-1069 is allosteric domain; that stretch reads MYPSKEKGKI…KDLEVFDITK (137 aa).

This sequence belongs to the CarB family. As to quaternary structure, composed of two chains; the small (or glutamine) chain promotes the hydrolysis of glutamine to ammonia, which is used by the large (or ammonia) chain to synthesize carbamoyl phosphate. Tetramer of heterodimers (alpha,beta)4. Requires Mg(2+) as cofactor. Mn(2+) is required as a cofactor.

The enzyme catalyses hydrogencarbonate + L-glutamine + 2 ATP + H2O = carbamoyl phosphate + L-glutamate + 2 ADP + phosphate + 2 H(+). It catalyses the reaction hydrogencarbonate + NH4(+) + 2 ATP = carbamoyl phosphate + 2 ADP + phosphate + 2 H(+). Its pathway is amino-acid biosynthesis; L-arginine biosynthesis; carbamoyl phosphate from bicarbonate: step 1/1. It participates in pyrimidine metabolism; UMP biosynthesis via de novo pathway; (S)-dihydroorotate from bicarbonate: step 1/3. Large subunit of the glutamine-dependent carbamoyl phosphate synthetase (CPSase). CPSase catalyzes the formation of carbamoyl phosphate from the ammonia moiety of glutamine, carbonate, and phosphate donated by ATP, constituting the first step of 2 biosynthetic pathways, one leading to arginine and/or urea and the other to pyrimidine nucleotides. The large subunit (synthetase) binds the substrates ammonia (free or transferred from glutamine from the small subunit), hydrogencarbonate and ATP and carries out an ATP-coupled ligase reaction, activating hydrogencarbonate by forming carboxy phosphate which reacts with ammonia to form carbamoyl phosphate. The chain is Carbamoyl phosphate synthase large chain from Clostridium botulinum (strain Alaska E43 / Type E3).